The chain runs to 764 residues: Plasma membrane fusion protein prm-1 (764 aa).

Residues 1–61 lie on the Extracellular side of the membrane; it reads MVYNEKNGGG…YLGLRARLSQ (61 aa). Residues 62-82 form a helical membrane-spanning segment; sequence LWFNRWTILLILVLIRVIILT. Residues 83 to 149 lie on the Cytoplasmic side of the membrane; that stretch reads ANLKENLGDA…LKMILTGVQA (67 aa). Residues 150–170 form a helical membrane-spanning segment; it reads IIMFVINMYIGTFACLVAAFI. At 171–334 the chain is on the extracellular side; that stretch reads HGGLHVATAV…SLITLVYKAK (164 aa). Residues asparagine 271 and asparagine 315 are each glycosylated (N-linked (GlcNAc...) asparagine). Residues 335–355 traverse the membrane as a helical segment; it reads IAFLVVIIILALLAIFVMGYI. The Cytoplasmic portion of the chain corresponds to 356 to 424; the sequence is EYRGFKRERE…AFAYATSLPA (69 aa). A helical transmembrane segment spans residues 425–445; it reads LFVLSLAVAGMLSCLFQWVLL. Residues 446–624 are Extracellular-facing; the sequence is RQIEKKAPEL…NGVIQEALIT (179 aa). Residues asparagine 479, asparagine 508, and asparagine 527 are each glycosylated (N-linked (GlcNAc...) asparagine). The helical transmembrane segment at 625–645 threads the bilayer; that stretch reads LGLFLTYVIVVLIGVMGALIG. Over 646–764 the chain is Cytoplasmic; it reads WATPGKTRGE…EKVPGYFTPI (119 aa). Disordered regions lie at residues 653–701 and 735–754; these read RGEG…GGGG and HQRT…PHGD.

It belongs to the PRM1 family.

The protein localises to the cell membrane. Its function is as follows. Involved in cell fusion during mating by stabilizing the plasma membrane fusion event. This Neurospora crassa (strain ATCC 24698 / 74-OR23-1A / CBS 708.71 / DSM 1257 / FGSC 987) protein is Plasma membrane fusion protein prm-1 (prm-1).